Reading from the N-terminus, the 346-residue chain is Secreted frizzled-related protein 4 (346 aa).

The N-terminal stretch at 1–18 (MFLSILVALCLWLHLALG) is a signal peptide. The region spanning 19-139 (VRGAPCEAVR…VYDRGVCISP (121 aa)) is the FZ domain. 5 disulfides stabilise this stretch: Cys-24–Cys-85, Cys-32–Cys-78, Cys-69–Cys-108, Cys-97–Cys-136, and Cys-101–Cys-125. N-linked (GlcNAc...) asparagine glycosylation is found at Asn-38 and Asn-68. N-linked (GlcNAc...) asparagine glycosylation is found at Asn-116, Asn-194, and Asn-240. In terms of domain architecture, NTR spans 178–307 (CKCKKVKPTL…IQDKKKTAGR (130 aa)). The span at 294-303 (QRRTIQDKKK) shows a compositional bias: basic and acidic residues. The disordered stretch occupies residues 294–346 (QRRTIQDKKKTAGRTSRSNPPKPKGKPPAPKPASPKKNIKTRSAQKKTNPKKV). Positions 313–326 (PPKPKGKPPAPKPA) are enriched in pro residues. Basic residues predominate over residues 330 to 346 (KNIKTRSAQKKTNPKKV).

Belongs to the secreted frizzled-related protein (sFRP) family.

The protein resides in the secreted. Functionally, soluble frizzled-related proteins (sFRPS) function as modulators of Wnt signaling through direct interaction with Wnts. They have a role in regulating cell growth and differentiation in specific cell types. SFRP4 plays a role in bone morphogenesis. May also act as a regulator of adult uterine morphology and function. May also increase apoptosis during ovulation possibly through modulation of FZ1/FZ4/WNT4 signaling. Has phosphaturic effects by specifically inhibiting sodium-dependent phosphate uptake. The polypeptide is Secreted frizzled-related protein 4 (SFRP4) (Macaca mulatta (Rhesus macaque)).